A 230-amino-acid chain; its full sequence is 5'-methylthioadenosine/S-adenosylhomocysteine nucleosidase (230 aa).

The active-site Proton acceptor is the glutamate 12. Substrate contacts are provided by residues glycine 78, isoleucine 153, and 174 to 175 (ME). Aspartate 198 (proton donor) is an active-site residue.

Belongs to the PNP/UDP phosphorylase family. MtnN subfamily.

The enzyme catalyses S-adenosyl-L-homocysteine + H2O = S-(5-deoxy-D-ribos-5-yl)-L-homocysteine + adenine. It catalyses the reaction S-methyl-5'-thioadenosine + H2O = 5-(methylsulfanyl)-D-ribose + adenine. It carries out the reaction 5'-deoxyadenosine + H2O = 5-deoxy-D-ribose + adenine. It functions in the pathway amino-acid biosynthesis; L-methionine biosynthesis via salvage pathway; S-methyl-5-thio-alpha-D-ribose 1-phosphate from S-methyl-5'-thioadenosine (hydrolase route): step 1/2. In terms of biological role, catalyzes the irreversible cleavage of the glycosidic bond in both 5'-methylthioadenosine (MTA) and S-adenosylhomocysteine (SAH/AdoHcy) to adenine and the corresponding thioribose, 5'-methylthioribose and S-ribosylhomocysteine, respectively. Also cleaves 5'-deoxyadenosine, a toxic by-product of radical S-adenosylmethionine (SAM) enzymes, into 5-deoxyribose and adenine. This Shewanella sediminis (strain HAW-EB3) protein is 5'-methylthioadenosine/S-adenosylhomocysteine nucleosidase.